The chain runs to 21 residues: Basic phospholipase A2 BjIV (21 aa).

It belongs to the phospholipase A2 family. Group II subfamily. Can form dimers, trimers and tetramers. It depends on Ca(2+) as a cofactor. Post-translationally, contains seven disulfide bonds. In terms of tissue distribution, expressed by the venom gland.

It is found in the secreted. It catalyses the reaction a 1,2-diacyl-sn-glycero-3-phosphocholine + H2O = a 1-acyl-sn-glycero-3-phosphocholine + a fatty acid + H(+). Inhibited by crotapotin. Snake venom phospholipase A2 has a high enzymatic activity and produces moderate myonecrosis in skeletal muscle, but shows no neuromuscular activity in mouse phrenic nerve-diaphragm preparations. PLA2 catalyzes the calcium-dependent hydrolysis of the 2-acyl groups in 3-sn-phosphoglycerides. In Bothrops jararacussu (Jararacussu), this protein is Basic phospholipase A2 BjIV.